A 280-amino-acid chain; its full sequence is Protease HtpX (280 aa).

Helical transmembrane passes span T7–G26 and G30–S49. H129 provides a ligand contact to Zn(2+). E130 is an active-site residue. Residue H133 coordinates Zn(2+). 2 consecutive transmembrane segments (helical) span residues A146–G166 and V178–I198. E203 is a binding site for Zn(2+).

It belongs to the peptidase M48B family. Zn(2+) is required as a cofactor.

Its subcellular location is the cell inner membrane. In Legionella pneumophila (strain Corby), this protein is Protease HtpX.